The primary structure comprises 118 residues: Large ribosomal subunit protein bL17 (118 aa).

Belongs to the bacterial ribosomal protein bL17 family. As to quaternary structure, part of the 50S ribosomal subunit. Contacts protein L32.

In Thermus thermophilus (strain ATCC BAA-163 / DSM 7039 / HB27), this protein is Large ribosomal subunit protein bL17.